A 241-amino-acid chain; its full sequence is Thiamine import ATP-binding protein ThiQ (241 aa).

The ABC transporter domain maps to 7 to 235; it reads IRLSDVRFSY…AGPEALRHYI (229 aa). 37 to 44 contacts ATP; it reads GPSGSGKS.

The protein belongs to the ABC transporter superfamily. Thiamine importer (TC 3.A.1.19.1) family. In terms of assembly, the complex is composed of two ATP-binding proteins (ThiQ), two transmembrane proteins (ThiP) and a solute-binding protein (ThiB).

It is found in the cell inner membrane. The enzyme catalyses thiamine(out) + ATP + H2O = thiamine(in) + ADP + phosphate + H(+). Its function is as follows. Part of the ABC transporter complex ThiBPQ involved in thiamine import. Responsible for energy coupling to the transport system. The chain is Thiamine import ATP-binding protein ThiQ from Brucella melitensis biotype 1 (strain ATCC 23456 / CCUG 17765 / NCTC 10094 / 16M).